Consider the following 149-residue polypeptide: Large ribosomal subunit protein uL13 (149 aa).

This sequence belongs to the universal ribosomal protein uL13 family. In terms of assembly, part of the 50S ribosomal subunit.

Functionally, this protein is one of the early assembly proteins of the 50S ribosomal subunit, although it is not seen to bind rRNA by itself. It is important during the early stages of 50S assembly. This is Large ribosomal subunit protein uL13 from Borrelia duttonii (strain Ly).